A 450-amino-acid chain; its full sequence is Folate synthesis bifunctional protein (450 aa).

An HPPK region spans residues 1-166 (MTTWNFVCLG…TFAELAAIYP (166 aa)). The Pterin-binding domain maps to 180–441 (TQIMGIVNVT…QVEGNRRVLA (262 aa)). A DHPS region spans residues 182-450 (IMGIVNVTDD…AAAAWSGMPV (269 aa)). Mg(2+) is bound at residue Asn187. (7,8-dihydropterin-6-yl)methyl diphosphate contacts are provided by residues Thr227, Asp267, Asn287, Asp358, Lys395, and 429 to 431 (RVH).

This sequence in the C-terminal section; belongs to the DHPS family. It in the N-terminal section; belongs to the HPPK family. Requires Mg(2+) as cofactor.

The enzyme catalyses 6-hydroxymethyl-7,8-dihydropterin + ATP = (7,8-dihydropterin-6-yl)methyl diphosphate + AMP + H(+). It carries out the reaction (7,8-dihydropterin-6-yl)methyl diphosphate + 4-aminobenzoate = 7,8-dihydropteroate + diphosphate. It functions in the pathway cofactor biosynthesis; tetrahydrofolate biosynthesis; 2-amino-4-hydroxy-6-hydroxymethyl-7,8-dihydropteridine diphosphate from 7,8-dihydroneopterin triphosphate: step 4/4. It participates in cofactor biosynthesis; tetrahydrofolate biosynthesis; 7,8-dihydrofolate from 2-amino-4-hydroxy-6-hydroxymethyl-7,8-dihydropteridine diphosphate and 4-aminobenzoate: step 1/2. The chain is Folate synthesis bifunctional protein (folKP) from Chlamydia muridarum (strain MoPn / Nigg).